The primary structure comprises 66 residues: Protein translocase subunit SecE (66 aa).

Residues 29–49 (LVASTLVVVVAVFIFSLTCLV) form a helical membrane-spanning segment.

It belongs to the SecE/SEC61-gamma family. As to quaternary structure, component of the Sec protein translocase complex. Heterotrimer consisting of SecY, SecE and SecG subunits. The heterotrimers can form oligomers, although 1 heterotrimer is thought to be able to translocate proteins. Interacts with the ribosome. Interacts with SecDF, and other proteins may be involved. Interacts with SecA.

The protein localises to the cell inner membrane. Its function is as follows. Essential subunit of the Sec protein translocation channel SecYEG. Clamps together the 2 halves of SecY. May contact the channel plug during translocation. The sequence is that of Protein translocase subunit SecE from Rickettsia rickettsii.